We begin with the raw amino-acid sequence, 312 residues long: Pantothenate kinase (312 aa).

97–104 (GSVAVGKS) lines the ATP pocket.

It belongs to the prokaryotic pantothenate kinase family.

The protein resides in the cytoplasm. The enzyme catalyses (R)-pantothenate + ATP = (R)-4'-phosphopantothenate + ADP + H(+). It functions in the pathway cofactor biosynthesis; coenzyme A biosynthesis; CoA from (R)-pantothenate: step 1/5. This chain is Pantothenate kinase, found in Mycolicibacterium paratuberculosis (strain ATCC BAA-968 / K-10) (Mycobacterium paratuberculosis).